Here is a 501-residue protein sequence, read N- to C-terminus: Cytochrome P450 monooxygenase notH (501 aa).

The chain crosses the membrane as a helical span at residues 11 to 31 (LGLESVGWVLGLLTTSILYLF). Asn298 carries an N-linked (GlcNAc...) asparagine glycan. Cys442 provides a ligand contact to heme.

This sequence belongs to the cytochrome P450 family. It depends on heme as a cofactor.

It localises to the membrane. Its pathway is alkaloid biosynthesis. Its function is as follows. Cytochrome P450 monooxygenase; part of the gene cluster that mediates the biosynthesis of notoamide, a fungal indole alkaloid that belongs to a family of natural products containing a characteristic bicyclo[2.2.2]diazaoctane core. The first step of notoamide biosynthesis involves coupling of L-proline and L-tryptophan by the bimodular NRPS notE, to produce cyclo-L-tryptophan-L-proline called brevianamide F. The reverse prenyltransferase notF then acts as a deoxybrevianamide E synthase and converts brevianamide F to deoxybrevianamide E via reverse prenylation at C-2 of the indole ring leading to the bicyclo[2.2.2]diazaoctane core. Deoxybrevianamide E is further hydroxylated at C-6 of the indole ring, likely catalyzed by the cytochrome P450 monooxygenase notG, to yield 6-hydroxy-deoxybrevianamide E. 6-hydroxy-deoxybrevianamide E is a specific substrate of the prenyltransferase notC for normal prenylation at C-7 to produce 6-hydroxy-7-prenyl-deoxybrevianamide, also called notoamide S. As the proposed pivotal branching point in notoamide biosynthesis, notoamide S can be diverted to notoamide E through an oxidative pyran ring closure putatively catalyzed by either notH cytochrome P450 monooxygenase or the notD FAD-linked oxidoreductase. This step would be followed by an indole 2,3-epoxidation-initiated pinacol-like rearrangement catalyzed by the notB FAD-dependent monooxygenase leading to the formation of notoamide C and notoamide D. On the other hand notoamide S is converted to notoamide T by notH (or notD), a bifunctional oxidase that also functions as the intramolecular Diels-Alderase responsible for generation of (+)-notoamide T. To generate antipodal (-)-notoaminide T, notH' (or notD') in Aspergillus versicolor is expected to catalyze a Diels-Alder reaction leading to the opposite stereochemistry. The remaining oxidoreductase notD (or notH) likely catalyzes the oxidative pyran ring formation to yield (+)-stephacidin A. The FAD-dependent monooxygenase notI is highly similar to notB and is predicted to catalyze a similar conversion from (+)-stephacidin A to (-)-notoamide B via the 2,3-epoxidation of (+)-stephacidin A followed by a pinacol-type rearrangement. Finally, it remains unclear which enzyme could be responsible for the final hydroxylation steps leading to notoamide A and sclerotiamide. The polypeptide is Cytochrome P450 monooxygenase notH (Aspergillus sp. (strain MF297-2)).